The sequence spans 367 residues: UDP-D-xylose:L-fucose alpha-1,3-D-xylosyltransferase (367 aa).

A compositionally biased stretch (polar residues) spans Met1–Gln10. The interval Met1–Tyr21 is disordered. Residues Met1–Asn35 lie on the Cytoplasmic side of the membrane. Residues Arg12–Tyr21 show a composition bias toward low complexity. A helical; Signal-anchor for type II membrane protein transmembrane segment spans residues Gly36 to Gly56. The Lumenal segment spans residues Ser57–Gln367. 3 N-linked (GlcNAc...) asparagine glycosylation sites follow: Asn85, Asn98, and Asn173. Residues Asp196–Asp198 carry the DXD motif motif. Residues Asn228 and Asn292 are each glycosylated (N-linked (GlcNAc...) asparagine).

The protein belongs to the glycosyltransferase 77 family. Requires Mn(2+) as cofactor. The cofactor is Mg(2+). In terms of processing, glycosylated. As to expression, expressed in roots, rosette leaves, stems and flowers.

It localises to the golgi apparatus membrane. Functionally, catalyzes the transfer of D-xylose from UDP-alpha-D-xylose onto L-fucose. Probably involved in the biosynthesis of rhamnogalacturonan II (RG-II) through xylosylation of the internal fucose moiety of the A-chain of RG-II, a structurally complex pectic polysaccharide of the primary cell wall. RG-II is essential for the cell wall integrity of rapidly growing tissues such as roots and pollen tube growth and elongation. This is UDP-D-xylose:L-fucose alpha-1,3-D-xylosyltransferase from Arabidopsis thaliana (Mouse-ear cress).